The primary structure comprises 340 residues: Dihydroorotate dehydrogenase (quinone) (340 aa).

FMN is bound by residues 65-69 (AGADK) and Thr89. Residue Lys69 participates in substrate binding. 114–118 (NRNGF) serves as a coordination point for substrate. FMN is bound by residues Asn142 and Asn175. A substrate-binding site is contributed by Asn175. Ser178 functions as the Nucleophile in the catalytic mechanism. Asn180 lines the substrate pocket. 2 residues coordinate FMN: Lys220 and Thr248. 249 to 250 (NT) provides a ligand contact to substrate. Residues Gly271, Gly300, and 321-322 (YS) contribute to the FMN site.

This sequence belongs to the dihydroorotate dehydrogenase family. Type 2 subfamily. In terms of assembly, monomer. Requires FMN as cofactor.

The protein localises to the cell membrane. The catalysed reaction is (S)-dihydroorotate + a quinone = orotate + a quinol. Its pathway is pyrimidine metabolism; UMP biosynthesis via de novo pathway; orotate from (S)-dihydroorotate (quinone route): step 1/1. In terms of biological role, catalyzes the conversion of dihydroorotate to orotate with quinone as electron acceptor. This Actinobacillus succinogenes (strain ATCC 55618 / DSM 22257 / CCUG 43843 / 130Z) protein is Dihydroorotate dehydrogenase (quinone).